A 416-amino-acid polypeptide reads, in one-letter code: N-acetyl-L-cysteine deacetylase (416 aa).

C128, H130, E164, H188, and H380 together coordinate Zn(2+).

It belongs to the peptidase M20 family. Zn(2+) serves as cofactor. Requires Co(2+) as cofactor.

The catalysed reaction is N-acetyl-L-cysteine + H2O = L-cysteine + acetate. It participates in amino-acid metabolism. Involved in a cysteine salvage pathway from S-alkylcysteine. Catalyzes the last step in this pathway, i.e. the deacetylation of N-acetyl-L-cysteine. This pathway is likely important in the catabolism of alkylated cysteine generated by proteolysis of alkylated glutathione formed in the detoxification of a wide range of electrophiles. The chain is N-acetyl-L-cysteine deacetylase from Bacillus subtilis (strain 168).